We begin with the raw amino-acid sequence, 201 residues long: UPF0301 protein Mvan_6057 (201 aa).

Belongs to the UPF0301 (AlgH) family.

The protein is UPF0301 protein Mvan_6057 of Mycolicibacterium vanbaalenii (strain DSM 7251 / JCM 13017 / BCRC 16820 / KCTC 9966 / NRRL B-24157 / PYR-1) (Mycobacterium vanbaalenii).